The chain runs to 294 residues: Aquaporin-B (294 aa).

A disordered region spans residues methionine 1 to proline 31. The Cytoplasmic segment spans residues methionine 1–arginine 42. Residues glycine 22–proline 31 are compositionally biased toward basic and acidic residues. A helical membrane pass occupies residues tryptophan 43–leucine 63. Residues cysteine 64–proline 79 lie on the Extracellular side of the membrane. Serine 75 carries an O-linked (GalNAc...) serine glycan. The chain crosses the membrane as a helical span at residues valine 80–valine 100. The Cytoplasmic segment spans residues serine 101–lysine 123. The NPA 1 signature appears at asparagine 106–alanine 108. The chain crosses the membrane as a helical span at residues glycine 124–alanine 144. The Extracellular portion of the chain corresponds to threonine 145–asparagine 172. The chain crosses the membrane as a helical span at residues alanine 173–phenylalanine 193. Over aspartate 194–alanine 224 the chain is Cytoplasmic. Residues serine 208–serine 219 are required for water permeability. The helical transmembrane segment at glycine 225–valine 245 threads the bilayer. Topologically, residues serine 246–histidine 268 are extracellular. The NPA 2 signature appears at asparagine 251–alanine 253. The helical transmembrane segment at tryptophan 269–phenylalanine 289 threads the bilayer. The Cytoplasmic portion of the chain corresponds to serine 290–lysine 294.

The protein belongs to the MIP/aquaporin (TC 1.A.8) family. Post-translationally, glycosylated and non-glycosylated forms exist throughout all developmental stages.

The protein localises to the cell membrane. The protein resides in the cytoplasmic vesicle. In terms of biological role, putatively gated water-specific channel, requiring a cysteine residue within the channel. Impermeable to water, glycerol and urea when expressed in Xenopus oocytes. Not regulated by pH; channels remain impermeable to water at pH 7.4 and 5.2. This is Aquaporin-B from Dictyostelium discoideum (Social amoeba).